Reading from the N-terminus, the 476-residue chain is Lactate utilization protein B 1 (476 aa).

4Fe-4S ferredoxin-type domains are found at residues 301–331 and 350–379; these read GTEF…GHAY and YDEY…LHDL. [4Fe-4S] cluster contacts are provided by Cys-310, Cys-313, Cys-316, Cys-320, Cys-363, Cys-366, and Cys-370.

The protein belongs to the LutB/YkgF family.

In terms of biological role, is involved in L-lactate degradation and allows cells to grow with lactate as the sole carbon source. Has probably a role as an electron transporter during oxidation of L-lactate. In Bacillus mycoides (strain KBAB4) (Bacillus weihenstephanensis), this protein is Lactate utilization protein B 1.